The chain runs to 75 residues: Small ribosomal subunit protein bS18 (75 aa).

Belongs to the bacterial ribosomal protein bS18 family. As to quaternary structure, part of the 30S ribosomal subunit. Forms a tight heterodimer with protein bS6.

Functionally, binds as a heterodimer with protein bS6 to the central domain of the 16S rRNA, where it helps stabilize the platform of the 30S subunit. The protein is Small ribosomal subunit protein bS18 of Psychrobacter sp. (strain PRwf-1).